The primary structure comprises 36 residues: uncharacterized protein (36 aa).

It localises to the mitochondrion. This is an uncharacterized protein from Saccharomyces cerevisiae (strain ATCC 204508 / S288c) (Baker's yeast).